A 170-amino-acid chain; its full sequence is MRLWPAIAISLPRVTPPEGCEIDGSWVPGGTKVGVSQWSAYRSERNFARADQFLPERWLPEGEEESFINDTRAAFQPFSTGPRNCLGMNFARAETRIIFARLLLDFDLELLTGRDEWEAQKVYIIWDRCPLYVRGFGRQTRHKRPANLWLPWDTHGSSASNERKLADLLS.

Residue Cys85 coordinates heme.

The protein belongs to the cytochrome P450 family. Heme serves as cofactor.

It functions in the pathway secondary metabolite biosynthesis. Functionally, cytochrome P450 monooxygenase; part of the gene cluster that mediates the biosynthesis of oryzines, natural products with an unusual maleidride backbone. The two subunits of the fungal fatty acid synthase oryfasA and oryfasB probably form octenoic acid. This fatty acid is most likely activated by the acyl-CoA ligase oryP to give octenyl-CoA before the citrate synthase-like protein oryE catalyzes condensation with oxaloacetate to form tricarboxylic acid. The next steps of the pathways are conjectural, but a favorite possible route has been proposed, beginning with decarboxylation and concomitant dehydration by the decarboxylase oryM, followed by tautomerization, which may lead to the production of a diene intermediate. Reduction of this diene intermediate could give the known metabolite piliformic acid. On the pathway to oryzine B and oryzine A, however, hydroxylation of the diene by the alpha-ketoglutarate-dependent dioxygenase oryG and lactonisation by the lactonohydrolases oryH or oryL could give oryzine B directly. Finally, enoyl reduction by the dehydrogenase oryD would then convert oryzine B into oryzine A. The protein is Cytochrome P450 monooxygenase oryQ of Aspergillus oryzae (strain ATCC 42149 / RIB 40) (Yellow koji mold).